The sequence spans 256 residues: Imidazole glycerol phosphate synthase subunit HisF (256 aa).

Residues aspartate 11 and aspartate 130 contribute to the active site.

Belongs to the HisA/HisF family. Heterodimer of HisH and HisF.

It is found in the cytoplasm. The enzyme catalyses 5-[(5-phospho-1-deoxy-D-ribulos-1-ylimino)methylamino]-1-(5-phospho-beta-D-ribosyl)imidazole-4-carboxamide + L-glutamine = D-erythro-1-(imidazol-4-yl)glycerol 3-phosphate + 5-amino-1-(5-phospho-beta-D-ribosyl)imidazole-4-carboxamide + L-glutamate + H(+). It functions in the pathway amino-acid biosynthesis; L-histidine biosynthesis; L-histidine from 5-phospho-alpha-D-ribose 1-diphosphate: step 5/9. Its function is as follows. IGPS catalyzes the conversion of PRFAR and glutamine to IGP, AICAR and glutamate. The HisF subunit catalyzes the cyclization activity that produces IGP and AICAR from PRFAR using the ammonia provided by the HisH subunit. This is Imidazole glycerol phosphate synthase subunit HisF from Prochlorococcus marinus (strain MIT 9215).